The sequence spans 31 residues: Cyclotide mden-N (31 aa).

The segment at residues 1–31 (GTIPCGESCVYIPCLTSALGCSCKNKVCYRN) is a cross-link (cyclopeptide (Gly-Asn)). 3 disulfide bridges follow: C5–C21, C9–C23, and C14–C28.

Belongs to the cyclotide family. Bracelet subfamily. This is a cyclic peptide.

Its function is as follows. Probably participates in a plant defense mechanism. The protein is Cyclotide mden-N of Melicytus dentatus (Tree violet).